Here is a 95-residue protein sequence, read N- to C-terminus: ESAT-6-like protein EsxC (95 aa).

The protein belongs to the WXG100 family. ESAT-6 subfamily.

The protein localises to the secreted. The sequence is that of ESAT-6-like protein EsxC from Mycolicibacterium paratuberculosis (strain ATCC BAA-968 / K-10) (Mycobacterium paratuberculosis).